The primary structure comprises 342 residues: S-adenosylmethionine:tRNA ribosyltransferase-isomerase (342 aa).

It belongs to the QueA family. In terms of assembly, monomer.

The protein resides in the cytoplasm. It carries out the reaction 7-aminomethyl-7-carbaguanosine(34) in tRNA + S-adenosyl-L-methionine = epoxyqueuosine(34) in tRNA + adenine + L-methionine + 2 H(+). It participates in tRNA modification; tRNA-queuosine biosynthesis. Its function is as follows. Transfers and isomerizes the ribose moiety from AdoMet to the 7-aminomethyl group of 7-deazaguanine (preQ1-tRNA) to give epoxyqueuosine (oQ-tRNA). This chain is S-adenosylmethionine:tRNA ribosyltransferase-isomerase, found in Bacillus subtilis (strain 168).